We begin with the raw amino-acid sequence, 2175 residues long: MSNILLFGDQTAEQYPLLHRIVLRKDNVLLLSFVERCALALREETRTLSRSQREVMPDFLTLSNLIEAYYQKGEKVLMLESAFLTIAQLGHYIGYFSENPSELPAVSDTRVLGLCTGLLAASAVVSAKTVEELAIVGVDFVRIAFRSGAVVDNVRSMLGQSSQDKSTWSTIISGPSEVDVKDALTSFHEASGIPRSNQAYVSAVSTMALTVSGPPITVERFFQESSLIINHRVSIPIYGPYHAGHLFGEAECERILSGEVGQELRKHMPASLVHSAATGKPIVSENAYELAKLALGEIHQYPVRWDYLLEETVAQIGHYPCGAKIFALGASNIATSLSSALKAGGQADVMIVDEASFVETKKYTGRTQTDKIAIVGMAGRFPNSANHEALWDLLMKGLDVHRKVPADRFDADAHCDPSGKGKNKSHTPFGCFIDEPGLFDPRFFNMSPREAAQTDPMGRLALVTAYEALEMSGYVPNRSTSTKLNRIGTFYGQTSDDWREINAAENVDTYYITGGVRAFAPGRINYYFKFSGPSYSIDTACSSSLAAIQLACTSLWAGDCDTACAGGLNVLTNPDIFSGLSKGQFLSKTGGCKTYDNDADGYCRGDACGTVILKRYQDAVADKDNILGCILGAATNHSAEAVSITHPHAGAQEFLYKQVLANAGIDAHEISYVEMHGTGTQAGDGIEMTSVTNVFAPRRRQRKPEQTVHLGAIKANVGHAEAASGINSLVKVLMMMKNNKIPANVGVKGELNKTFPADLKDRNVHISLKQVDWPRKTEAPRKVFLNNFSAAGGNTALLIEDGPVHKMPNGVDPRSTLPITVTARSIGSLKRNLMNLQKYVAENGSTTLPSFSYTLTARRIQHNYRVAFPLADISKVADALEAQAKDSYSPVPMVTTKTAFCFTGQGSQYTGLGQKLYQDLKSFRDDIDQLDQMARIQGLPSFLELLDGTDVQTLSPVKVQLGMACIQVALSRMWASWGVTPTAVIGHSLGEYAALHVAGVISASDMVLLVGRRAELLVRECTPHTHGMLAVKGGVEAIRNALGINMTEIACINGPEETVLCGSSDVVAAANDTLGKNGFKATKLNVPFAFHSAQVDPILDEFRKVASSVTFNKPSVPILSPLVGIVIRDGGIITADYLARHARETVNFSSALLSGQKEAVFDEKTAWLEVGAHPVCSGMVKASIGTTITAPSLRRGEDAWKTISTSICHLFTAGVNFNFDEFHREFNDAQELLTLPTYSFDNKKYWLDYHNNWTLTKGEVQKTKEVIVEKEIVAPVIEVPAKRLSTSCQNVISEEFDGNRATVVIRSNLADSKLYPVVCGHMVNNAALCPSSLYADMALTVGDYIYKELQPGVETPGMNVCNMEVPKPFIANIPQPAEGQHLEMEATADLDLGTVSLKFRSVHPDGKKIQDHAFCTIRYEDKAVWASEWTRYNYMVKAQIDMLTARTMTGGAHKVQRGMAYKLFKALVNYDDKYRAMAEVVLDGANTEASAAIDFPTKPDDGDFYCPPYHIDGACHISGFIVNASDLLDSEQNVYVSHGWGAMKFSRPLVAGMKLRNYVRMVPQPNNISKGDVYIMEGDEIVAVCEGIKFQQIPRKVLNVFLPPNKGSAVQAKPSPIAQRPAPVRASVAAPVKRMLAPAPVRKSAGPAKAAAAPSMPKPSKVAAKKPAGSMVDKVLTILSKETEVDVAELVDDAHFENLGVDSLLSLTISAIFREDLSMEISPSLFTDYPTVGEMKKYFSQFNNVESTTESEDDSDTDSLATTDVATPFDEMSTPASSAPSVPQSDAGKPSPDSPTGDSLSDDVGDVSIARHIIAQEMGVDISEVTDDAELAEMGMDSLMSLTILGELREKTGIDLPGTFLMTNPTLVDIENALGMRPKPKAVGPKLSKPSTKTDMNEVSSRLTAINKTDISQYPSATSVLLQGNPKTATKKVFFLPDGSGSATSYVSIPNIGPHVAAFGLNCPFMKDPEQWQCGIEVSSLIYLAEIRRRQPKGPYIIGGWSAGGVIAYAVAQALLAAGEKVEKLLLLDSPCPVNLAPLPTRLHVFFNEIGLLGTGDPAKTPKWLLPHFSAAIRSLSAYDPKPTIAELPTYAVWCKDGVAGNPGDPRPPPAEEEDPAPMKWLLNHRTDFSDNGWAQLCGQNMKFGVMGGHHFSMMKDPHASELGQLIKEGIEWKA.

An N-terminal acylcarrier protein transacylase domain (SAT) region spans residues 5 to 242 (LLFGDQTAEQ…VSIPIYGPYH (238 aa)). Residues 369 to 801 (TDKIAIVGMA…GGNTALLIED (433 aa)) form the Ketosynthase family 3 (KS3) domain. Catalysis depends on for beta-ketoacyl synthase activity residues Cys541, His676, and His719. The tract at residues 900–1212 (FCFTGQGSQY…ISTSICHLFT (313 aa)) is malonyl-CoA:ACP transacylase (MAT) domain. Ser988 functions as the For acyl/malonyl transferase activity in the catalytic mechanism. The product template (PT) domain stretch occupies residues 1285-1604 (STSCQNVISE…RKVLNVFLPP (320 aa)). Positions 1289–1424 (QNVISEEFDG…CTIRYEDKAV (136 aa)) are N-terminal hotdog fold. One can recognise a PKS/mFAS DH domain in the interval 1289 to 1599 (QNVISEEFDG…FQQIPRKVLN (311 aa)). The active-site Proton acceptor; for dehydratase activity is His1321. The segment at 1452–1599 (AHKVQRGMAY…FQQIPRKVLN (148 aa)) is C-terminal hotdog fold. The active-site Proton donor; for dehydratase activity is the Asp1512. The segment at 1640–1664 (PVRKSAGPAKAAAAPSMPKPSKVAA) is disordered. Low complexity predominate over residues 1643–1664 (KSAGPAKAAAAPSMPKPSKVAA). Positions 1666-1743 (KPAGSMVDKV…EMKKYFSQFN (78 aa)) constitute a Carrier 1 domain. Position 1703 is an O-(pantetheine 4'-phosphoryl)serine (Ser1703). A disordered region spans residues 1766-1804 (ATPFDEMSTPASSAPSVPQSDAGKPSPDSPTGDSLSDDV). The span at 1774–1784 (TPASSAPSVPQ) shows a compositional bias: polar residues. The 78-residue stretch at 1801-1878 (SDDVGDVSIA…DIENALGMRP (78 aa)) folds into the Carrier 2 domain. Ser1838 is modified (O-(pantetheine 4'-phosphoryl)serine). The disordered stretch occupies residues 1879–1899 (KPKAVGPKLSKPSTKTDMNEV). Residues 1889–1899 (KPSTKTDMNEV) are compositionally biased toward polar residues. The claisen cyclase domain stretch occupies residues 1932 to 2158 (KVFFLPDGSG…GHHFSMMKDP (227 aa)). The active-site For Claisen cyclase activity is the Ser2002.

It depends on pantetheine 4'-phosphate as a cofactor.

The enzyme catalyses 6 malonyl-CoA + acetyl-CoA + 6 H(+) = naphtopyrone YWA1 + 6 CO2 + 7 CoA + H2O. It participates in pigment biosynthesis; melanin biosynthesis. Its function is as follows. Non-reducing polyketide synthase; part of the gene cluster 29 that mediates the biosynthesis of mediates the biosynthesis of dihydroxynaphthalene (DHN)-melanin, a bluish-green pigment and a structural component of the conidial wall. The first step of the pathway is the production of the heptaketide naphtopyrone YWA1 by the polyketide synthase PKS1 though condensation of acetyl-CoA with malonyl-CoA. This chain is Non-reducing polyketide synthase PKS1, found in Zymoseptoria tritici (strain CBS 115943 / IPO323) (Speckled leaf blotch fungus).